The chain runs to 590 residues: V-type ATP synthase alpha chain (590 aa).

232–239 (GPFGSGKT) lines the ATP pocket.

Belongs to the ATPase alpha/beta chains family.

It carries out the reaction ATP + H2O + 4 H(+)(in) = ADP + phosphate + 5 H(+)(out). In terms of biological role, produces ATP from ADP in the presence of a proton gradient across the membrane. The V-type alpha chain is a catalytic subunit. This Thermoanaerobacter pseudethanolicus (strain ATCC 33223 / 39E) (Clostridium thermohydrosulfuricum) protein is V-type ATP synthase alpha chain.